Consider the following 358-residue polypeptide: G-protein coupled receptor 87 (358 aa).

Residues 1–47 (MGLNLTLTKLPGNELYSQASHTANSTSEGHGKNSTLHNKFDTIILPV) lie on the Extracellular side of the membrane. Residues Asn4, Asn24, and Asn33 are each glycosylated (N-linked (GlcNAc...) asparagine). Residues 48–68 (LYLVIFVASILLNGLAVWIFF) traverse the membrane as a helical segment. At 69-75 (HIRNKTS) the chain is on the cytoplasmic side. Residues 76 to 96 (FIFYLKNIVVADLIMTLTFPF) form a helical membrane-spanning segment. Residues 97 to 116 (RIVRDAGFGPWYFEFILCRY) are Extracellular-facing. A disulfide bridge links Cys114 with Cys192. Residues 117–137 (TSVLFYANMYTSIVFLGLISV) traverse the membrane as a helical segment. Residues 138–159 (DRYLKVVKPFGDSRMYSITFTK) are Cytoplasmic-facing. The helical transmembrane segment at 160-180 (VLSVCVWVIMAILSLPNIILT) threads the bilayer. The Extracellular segment spans residues 181–208 (NGQPTKENIHDCMKLKSPLGAKWHMAVT). A helical transmembrane segment spans residues 209 to 229 (YVDSCLFVAVLVILIGCYIAI). Residues 230-256 (SRYIHKSSRQFISQSSRKRKHNQSIRV) are Cytoplasmic-facing. A helical membrane pass occupies residues 257 to 277 (VVAVFFTCFLPYHLCRIPFTF). Over 278–297 (SNLDRLLDESAHKILYYCKE) the chain is Extracellular. The chain crosses the membrane as a helical span at residues 298 to 318 (MTLFLSACNVCLDPIIYFFMC). Residues 319 to 358 (KSFSRRLFKKSNIRTRSESIRSLQSVRRSEVRIYYDYTDV) are Cytoplasmic-facing.

It belongs to the G-protein coupled receptor 1 family. In terms of tissue distribution, expressed at high levels in testis and brain and to a lesser extent placenta, ovary, prostate, and skeletal muscle but not in heart, lung, kidney, liver or intestine.

The protein resides in the cell membrane. Its function is as follows. Receptor for lysophosphatidic acid (LPA). Necessary for p53/TP53-dependent survival in response to DNA damage. Promotes the Hippo-YAP signaling pathway and thereby modulates glycolysis and oxidative stress production by the regulation of hexokinase-2/HK2. This chain is G-protein coupled receptor 87 (Gpr87), found in Mus musculus (Mouse).